Reading from the N-terminus, the 294-residue chain is Ethylene-inducing xylanase 3 (294 aa).

An N-terminal signal peptide occupies residues 1–19; it reads MVCFSSLFVAASAIAGVFA. One can recognise a GH11 domain in the interval 31-226; it reads QSTPSSQGTH…SSGSARINVA (196 aa). The active-site Nucleophile is the E122. The Proton donor role is filled by E213. The CBM1 domain occupies 259 to 294; that stretch reads SCAARWGQCGGSGWNGATCCSAGTCQAQNQWYSQCL.

The protein belongs to the glycosyl hydrolase 11 (cellulase G) family.

The catalysed reaction is Endohydrolysis of (1-&gt;4)-beta-D-xylosidic linkages in xylans.. It participates in glycan degradation; xylan degradation. Its function is as follows. Endo-1,4-beta-xylanase involved in the hydrolysis of xylan, a major structural heterogeneous polysaccharide found in plant biomass representing the second most abundant polysaccharide in the biosphere, after cellulose. Exhibits immunity-inducing activity in Nicotiana benthamiana. Can induce strong oxidative burst, activate the expression of defense-related genes, and increase resistance against oomycete and fungal pathogens in N.benthamiana. The sequence is that of Ethylene-inducing xylanase 3 from Verticillium dahliae (strain VdLs.17 / ATCC MYA-4575 / FGSC 10137) (Verticillium wilt).